The chain runs to 201 residues: Imidazole glycerol phosphate synthase subunit HisH (201 aa).

A Glutamine amidotransferase type-1 domain is found at 1–201; the sequence is MVFIADYGAG…LKVLANFAEL (201 aa). Cys-79 serves as the catalytic Nucleophile. Residues His-183 and Glu-185 contribute to the active site.

Heterodimer of HisH and HisF.

It is found in the cytoplasm. The catalysed reaction is 5-[(5-phospho-1-deoxy-D-ribulos-1-ylimino)methylamino]-1-(5-phospho-beta-D-ribosyl)imidazole-4-carboxamide + L-glutamine = D-erythro-1-(imidazol-4-yl)glycerol 3-phosphate + 5-amino-1-(5-phospho-beta-D-ribosyl)imidazole-4-carboxamide + L-glutamate + H(+). The enzyme catalyses L-glutamine + H2O = L-glutamate + NH4(+). Its pathway is amino-acid biosynthesis; L-histidine biosynthesis; L-histidine from 5-phospho-alpha-D-ribose 1-diphosphate: step 5/9. Its function is as follows. IGPS catalyzes the conversion of PRFAR and glutamine to IGP, AICAR and glutamate. The HisH subunit catalyzes the hydrolysis of glutamine to glutamate and ammonia as part of the synthesis of IGP and AICAR. The resulting ammonia molecule is channeled to the active site of HisF. The polypeptide is Imidazole glycerol phosphate synthase subunit HisH (Chlorobium chlorochromatii (strain CaD3)).